Consider the following 190-residue polypeptide: RNA pyrophosphohydrolase (190 aa).

The region spanning 6-149 (GYRPNVGIVL…KRGVYARALC (144 aa)) is the Nudix hydrolase domain. The Nudix box motif lies at 38–59 (GGMHSDETPVEAMYRELNEETG).

It belongs to the Nudix hydrolase family. RppH subfamily. A divalent metal cation serves as cofactor.

Accelerates the degradation of transcripts by removing pyrophosphate from the 5'-end of triphosphorylated RNA, leading to a more labile monophosphorylated state that can stimulate subsequent ribonuclease cleavage. This Xylella fastidiosa (strain 9a5c) protein is RNA pyrophosphohydrolase.